Reading from the N-terminus, the 564-residue chain is Pestheic acid cluster transcriptional regulator 3 (564 aa).

A DNA-binding region (zn(2)-C6 fungal-type) is located at residues 11 to 38 (CWTCRLRRKKCDEGKPECTTCQALSITC). A disordered region spans residues 71 to 123 (RTSSRYRVPPGQKANPKLAPKVHAAASTPSTNTSHSTETTPPSDNGFYDTAES). Residues 97–113 (STPSTNTSHSTETTPPS) show a composition bias toward polar residues.

It is found in the nucleus. Transcription factor that, with ptaR1 and ptaR2, coregulates the expression of the gene cluster that mediates the biosynthesis of pestheic acid, a diphenyl ether which is a biosynthetic precursor of the unique chloropupukeananes. This is Pestheic acid cluster transcriptional regulator 3 from Pestalotiopsis fici (strain W106-1 / CGMCC3.15140).